The primary structure comprises 170 residues: Large ribosomal subunit protein bL17 (170 aa).

A compositionally biased stretch (low complexity) spans 134–144 (ASAKAAQAQEK). The interval 134-170 (ASAKAAQAQEKPAQEEEVEATSDEVAYTSEPDKAAEH) is disordered.

The protein belongs to the bacterial ribosomal protein bL17 family. As to quaternary structure, part of the 50S ribosomal subunit. Contacts protein L32.

This chain is Large ribosomal subunit protein bL17, found in Mycobacterium leprae (strain Br4923).